The chain runs to 92 residues: DNA-directed RNA polymerase subunit omega (92 aa).

This sequence belongs to the RNA polymerase subunit omega family. In terms of assembly, the RNAP catalytic core consists of 2 alpha, 1 beta, 1 beta' and 1 omega subunit. When a sigma factor is associated with the core the holoenzyme is formed, which can initiate transcription.

It catalyses the reaction RNA(n) + a ribonucleoside 5'-triphosphate = RNA(n+1) + diphosphate. Promotes RNA polymerase assembly. Latches the N- and C-terminal regions of the beta' subunit thereby facilitating its interaction with the beta and alpha subunits. This Shewanella oneidensis (strain ATCC 700550 / JCM 31522 / CIP 106686 / LMG 19005 / NCIMB 14063 / MR-1) protein is DNA-directed RNA polymerase subunit omega.